Reading from the N-terminus, the 342-residue chain is S-adenosylmethionine:tRNA ribosyltransferase-isomerase (342 aa).

The protein belongs to the QueA family. Monomer.

The protein localises to the cytoplasm. The enzyme catalyses 7-aminomethyl-7-carbaguanosine(34) in tRNA + S-adenosyl-L-methionine = epoxyqueuosine(34) in tRNA + adenine + L-methionine + 2 H(+). It functions in the pathway tRNA modification; tRNA-queuosine biosynthesis. Functionally, transfers and isomerizes the ribose moiety from AdoMet to the 7-aminomethyl group of 7-deazaguanine (preQ1-tRNA) to give epoxyqueuosine (oQ-tRNA). The protein is S-adenosylmethionine:tRNA ribosyltransferase-isomerase of Streptococcus mutans serotype c (strain ATCC 700610 / UA159).